We begin with the raw amino-acid sequence, 715 residues long: Interferon-induced GTP-binding protein Mx2 (715 aa).

Positions 115 to 387 constitute a Dynamin-type G domain; sequence DLALPAIAVI…LIMHIQKSLP (273 aa). The segment at 125 to 132 is G1 motif; the sequence is GDQSSGKS. Residue 125–132 coordinates GTP; that stretch reads GDQSSGKS. Residues 150 to 152 are G2 motif; the sequence is VTR. Residues 225–228 are G3 motif; sequence DLPG. GTP contacts are provided by residues 225–229 and 294–297; these read DLPGI and TKPD. Residues 294–297 are G4 motif; that stretch reads TKPD. The tract at residues 326-329 is G5 motif; it reads KCRG. The GED domain occupies 623–714; it reads FTEIGIHLNA…ALCQFSSKEI (92 aa).

Belongs to the TRAFAC class dynamin-like GTPase superfamily. Dynamin/Fzo/YdjA family.

The protein localises to the cytoplasm. Its subcellular location is the nucleus. It localises to the nuclear pore complex. Its function is as follows. Interferon-induced dynamin-like GTPase with potent antiviral activity against human immunodeficiency virus type 1 (HIV-1). Acts by targeting the viral capsid and affects the nuclear uptake and/or stability of the HIV-1 replication complex and the subsequent chromosomal integration of the proviral DNA. Exhibits antiviral activity also against simian immunodeficiency virus (SIV-mnd). May play a role in regulating nucleocytoplasmic transport and cell-cycle progression. This is Interferon-induced GTP-binding protein Mx2 (MX2) from Homo sapiens (Human).